We begin with the raw amino-acid sequence, 399 residues long: STOREKEEPER protein (399 aa).

Disordered stretches follow at residues 1-160 (MAPK…RSLW) and 250-301 (GISN…EEQQ). Acidic residues predominate over residues 20-54 (EEQELVEESQEEEEQQSREEEGEEESGEETEEDEE). Over residues 69–79 (KLVQTPQKPQF) the composition is skewed to polar residues. Composition is skewed to low complexity over residues 80–100 (SSES…SGNS) and 116–125 (AAKAATPSKP). 2 stretches are compositionally biased toward basic and acidic residues: residues 143-152 (KIAEEEEKKS) and 270-299 (KTVE…KEEE).

This sequence belongs to the GeBP family. As to expression, expressed in tubers and in leaves treated with sucrose.

Its subcellular location is the nucleus. In terms of biological role, may act as a transcriptional regulator. Binds specifically to the B-box motif, a promoter element that is required for the tuber-specific and sucrose inducible expression of the patatin gene. This chain is STOREKEEPER protein, found in Solanum tuberosum (Potato).